Consider the following 1364-residue polypeptide: Condensin complex subunit 1 (1364 aa).

An interaction with XCAP-E and XCAP-C region spans residues 1–588 (MTFHFHIPLA…AQVNPTSEEL (588 aa)). Over residues 567–577 (DLEQPTTKDQD) the composition is skewed to basic and acidic residues. 2 disordered regions span residues 567-596 (DLEQ…VQNS) and 1273-1364 (LENM…SRAK). The segment covering 579–596 (AQVNPTSEELPSQEVQNS) has biased composition (polar residues). Threonine 1314 is modified (phosphothreonine; by CDK1). The Bipartite nuclear localization signal motif lies at 1317–1326 (PPASRKSRRK). The segment covering 1333–1345 (SDEESDLEAELSE) has biased composition (acidic residues). Phosphothreonine; by CDK1 occurs at positions 1348 and 1353.

The protein belongs to the CND1 (condensin subunit 1) family. Component of the condensin complex, which contains the XCAP-E/SMC2 and XCAP-C/SMC4 heterodimer, and three non SMC subunits that probably regulate the complex: XCAP-H/NCAPH, XCAP-D2/NCAPD2 and XCAP-G/NCAPG. Phosphorylated by CDK1. Its phosphorylation, as well as that of XCAP-H and XCAP-G subunits, activates the condensin complex and is required for chromosome condensation.

It is found in the nucleus. The protein localises to the cytoplasm. Its subcellular location is the chromosome. In terms of biological role, regulatory subunit of the condensin complex, a complex required for conversion of interphase chromatin into mitotic-like condense chromosomes. The condensin complex probably introduces positive supercoils into relaxed DNA in the presence of type I topoisomerases and converts nicked DNA into positive knotted forms in the presence of type II topoisomerases. May target the condensin complex to DNA via its C-terminal domain. The protein is Condensin complex subunit 1 (ncapd2) of Xenopus laevis (African clawed frog).